A 183-amino-acid polypeptide reads, in one-letter code: Ribosome rescue factor SmrB (183 aa).

The Smr domain occupies 98–173 (LDLHGLTQQQ…GDAALLVLIE (76 aa)).

This sequence belongs to the SmrB family. In terms of assembly, associates with collided ribosomes, but not with correctly translating polysomes.

Its function is as follows. Acts as a ribosome collision sensor. Detects stalled/collided disomes (pairs of ribosomes where the leading ribosome is stalled and a second ribosome has collided with it) and endonucleolytically cleaves mRNA at the 5' boundary of the stalled ribosome. Stalled/collided disomes form a new interface (primarily via the 30S subunits) that binds SmrB. Cleaved mRNA becomes available for tmRNA ligation, leading to ribosomal subunit dissociation and rescue of stalled ribosomes. This chain is Ribosome rescue factor SmrB, found in Klebsiella pneumoniae (strain 342).